The sequence spans 93 residues: Parbolysin P1 (93 aa).

3 disulfides stabilise this stretch: Cys16/Cys37, Cys22/Cys33, and Cys47/Cys60.

Belongs to the worm cytolysin family. Localized within the skin and proboscis and are most readily isolated from body mucus secretions.

The protein resides in the secreted. In terms of biological role, cytolysin that shows hemolytic activity (on bovine erythrocytes, HC(50)=5.75 mg/ml). This hemolytic activity is completely inhibited by small unilamelar vesicles composed of PC/PG, PC/PI and PC/PS in 1:1 molar ratios (with at least 100 mg/ml concentration). The recombinant protein does not show hemolytic activity, suggesting that it is not properly folded or that it requires a free N-terminal end for its activity. The sequence is that of Parbolysin P1 from Parborlasia corrugatus (Antarctic nemertean worm).